The primary structure comprises 477 residues: 3-isopropylmalate dehydratase large subunit (477 aa).

The [4Fe-4S] cluster site is built by cysteine 352, cysteine 413, and cysteine 416.

This sequence belongs to the aconitase/IPM isomerase family. LeuC type 1 subfamily. As to quaternary structure, heterodimer of LeuC and LeuD. Requires [4Fe-4S] cluster as cofactor.

It catalyses the reaction (2R,3S)-3-isopropylmalate = (2S)-2-isopropylmalate. It participates in amino-acid biosynthesis; L-leucine biosynthesis; L-leucine from 3-methyl-2-oxobutanoate: step 2/4. Its function is as follows. Catalyzes the isomerization between 2-isopropylmalate and 3-isopropylmalate, via the formation of 2-isopropylmaleate. In Pseudomonas putida (strain ATCC 47054 / DSM 6125 / CFBP 8728 / NCIMB 11950 / KT2440), this protein is 3-isopropylmalate dehydratase large subunit.